Reading from the N-terminus, the 445-residue chain is Trigger factor (445 aa).

The region spanning 172–257 (GDQVVIDFVG…VKSVNWAHMP (86 aa)) is the PPIase FKBP-type domain.

Belongs to the FKBP-type PPIase family. Tig subfamily.

The protein resides in the cytoplasm. The enzyme catalyses [protein]-peptidylproline (omega=180) = [protein]-peptidylproline (omega=0). Functionally, involved in protein export. Acts as a chaperone by maintaining the newly synthesized protein in an open conformation. Functions as a peptidyl-prolyl cis-trans isomerase. This is Trigger factor from Polynucleobacter asymbioticus (strain DSM 18221 / CIP 109841 / QLW-P1DMWA-1) (Polynucleobacter necessarius subsp. asymbioticus).